A 106-amino-acid polypeptide reads, in one-letter code: MAWFLLVIAGIEEIIAAIAMKYIDGTRKKWPIIVMTVGFGLSFYCLSQAMIVLPAGVAYAVWTGIGSIGVSAVGLIWFKERFQLSQVISLCLILAGVIGLRLTSSS.

Transmembrane regions (helical) follow at residues 3–23, 29–49, 50–70, and 82–102; these read WFLLVIAGIEEIIAAIAMKYI, KWPIIVMTVGFGLSFYCLSQA, MIVLPAGVAYAVWTGIGSIGV, and FQLSQVISLCLILAGVIGLRL.

It belongs to the drug/metabolite transporter (DMT) superfamily. Small multidrug resistance (SMR) (TC 2.A.7.1) family.

It is found in the cell membrane. This is an uncharacterized protein from Bacillus subtilis (strain 168).